Reading from the N-terminus, the 200-residue chain is uncharacterized protein (200 aa).

This is an uncharacterized protein from Treponema pallidum (strain Nichols).